Here is a 339-residue protein sequence, read N- to C-terminus: Probable E3 ubiquitin-protein ligase BAH1-like 1 (339 aa).

One can recognise an SPX domain in the interval 1–163 (MKFGAIYEEY…GSVSGRDFKS (163 aa)). The RING-type zinc finger occupies 235 to 284 (CPICLDTLFNPYALSCGHLFCKGCACGAASVYIFQGVKSAPPEAKCPVCR).

This sequence belongs to the RING-type zinc finger family.

It carries out the reaction S-ubiquitinyl-[E2 ubiquitin-conjugating enzyme]-L-cysteine + [acceptor protein]-L-lysine = [E2 ubiquitin-conjugating enzyme]-L-cysteine + N(6)-ubiquitinyl-[acceptor protein]-L-lysine.. It functions in the pathway protein modification; protein ubiquitination. In Oryza sativa subsp. indica (Rice), this protein is Probable E3 ubiquitin-protein ligase BAH1-like 1.